Consider the following 309-residue polypeptide: Zinc transporter ZIP2 (309 aa).

The Extracellular portion of the chain corresponds to 1–8 (MEVLLGVK). Residues 9-29 (IGCLLALLVLTLGCGLTPIYV) form a helical membrane-spanning segment. The Cytoplasmic segment spans residues 30 to 43 (KWFQMDAATGHHHR). The helical transmembrane segment at 44 to 64 (VLSLLGCTSAGVFLGAGLMHM) threads the bilayer. The Extracellular portion of the chain corresponds to 65 to 103 (TAEALEGIESEIQKFVEQNSTGSKGNSSRDAASSYVEYP). Residues 104–124 (YGELVISLGFFFVFLLESLAL) traverse the membrane as a helical segment. Topologically, residues 125 to 164 (QCCHGAAGGSTVQEEEWGGTHAFGFHKHPAVPSPSRGPLR) are cytoplasmic. Residues 165-185 (ALVLLLSLSFHSVFEGLAVGL) form a helical membrane-spanning segment. Residues His-175 and Glu-179 each coordinate Zn(2+). Residues 186 to 191 (QATVAA) are Extracellular-facing. Residues 192-212 (TIQLCVAVLAHKGLVVFSVGL) form a helical membrane-spanning segment. His-202 is a binding site for Zn(2+). Residues 213–225 (RLGKIGTGPRWAT) lie on the Cytoplasmic side of the membrane. The helical transmembrane segment at 226 to 246 (FCILSLALMSPVGLALGLTVA) threads the bilayer. Topologically, residues 247-258 (GGASGQTQGLAQ) are extracellular. Residues 259-279 (AVLEGIAAGTFLYVTFLEILP) traverse the membrane as a helical segment. A Zn(2+)-binding site is contributed by Glu-276. Residues 280 to 288 (RELACPEAP) lie on the Cytoplasmic side of the membrane. The chain crosses the membrane as a helical span at residues 289 to 309 (LAKYSCVAAGFAFMALIALWA).

Belongs to the ZIP transporter (TC 2.A.5) family. High expression in the liver, skin and ovary.

The protein resides in the cell membrane. The enzyme catalyses Zn(2+)(in) = Zn(2+)(out). It carries out the reaction Cd(2+)(in) = Cd(2+)(out). Functionally, transporter for the divalent cation Zn(2+). Mediates the influx of Zn(2+) into cells from extracellular space. The Zn(2+) uniporter activity is independent of H(+)-driving force, but is modulated by extracellular pH and membrane potential. Transports also other divalent cations Zn(2+), Cd2(+), Cu2(+), Co2(+) in the order of decreasing affinity, respectively. In the skin, aids in the differentiation of keratinocytes in the epidermis. In Mus musculus (Mouse), this protein is Zinc transporter ZIP2 (Slc39a2).